The following is a 445-amino-acid chain: Probable fructoselysine/psicoselysine transporter FrlA (445 aa).

A run of 11 helical transmembrane segments spans residues 10-32 (LGFW…FVSV), 39-61 (AGTP…PQMC), 97-119 (FWAN…LGFL), 126-143 (LGKF…LLHL), 153-175 (QTLI…IFWF), 188-210 (IGAT…SYTG), 230-252 (RALI…VISG), 272-294 (WIPA…VILG), 341-363 (GIFF…VMCF), 384-406 (LWRT…ILVA), and 411-433 (WAPI…AYAF).

It belongs to the amino acid-polyamine-organocation (APC) superfamily.

The protein localises to the cell inner membrane. The catalysed reaction is N(6)-(D-fructosyl)-L-lysine(in) = N(6)-(D-fructosyl)-L-lysine(out). It catalyses the reaction N(6)-(D-psicosyl)-L-lysine(in) = N(6)-(D-psicosyl)-L-lysine(out). The protein operates within carbohydrate metabolism; fructoselysine degradation. Functionally, is likely involved in the transport of fructoselysine and psicoselysine to the cytoplasm, where they are degraded. This Escherichia coli O157:H7 protein is Probable fructoselysine/psicoselysine transporter FrlA (frlA).